The following is a 421-amino-acid chain: Subtilisin-like protease 2 (421 aa).

Positions 1 to 16 are cleaved as a signal peptide; the sequence is MQLLNFGLLLLPFVAG. Positions 17 to 122 are excised as a propeptide; that stretch reads DLAPQPEPLL…VHPDQHVYLA (106 aa). The Inhibitor I9 domain maps to 36–122; sequence QYIVTLKEGL…VHPDQHVYLA (87 aa). In terms of domain architecture, Peptidase S8 spans 131–421; it reads RWGLGYMSSK…ERKFTLPKYY (291 aa). Residues D169 and H201 each act as charge relay system in the active site. 3 N-linked (GlcNAc...) asparagine glycosylation sites follow: N248, N261, and N348. The active-site Charge relay system is the S357. Residue N388 is glycosylated (N-linked (GlcNAc...) asparagine).

The protein belongs to the peptidase S8 family.

The protein localises to the secreted. Secreted subtilisin-like serine protease with keratinolytic activity that contributes to pathogenicity. This Trichophyton verrucosum (strain HKI 0517) protein is Subtilisin-like protease 2 (SUB2).